We begin with the raw amino-acid sequence, 378 residues long: Cyclic di-GMP phosphodiesterase response regulator RpfG (378 aa).

One can recognise a Response regulatory domain in the interval 29 to 147; that stretch reads NIVIVDDQMS…ELRARCSNLL (119 aa). Residue aspartate 80 is modified to 4-aspartylphosphate. The region spanning 174-371 is the HD-GYP domain; that stretch reads VEERERETLS…LEQICGQFST (198 aa).

In terms of assembly, interacts with a subset of GGDEF domain-containing proteins. Phosphorylated and activated by RpfC.

It is found in the cytoplasm. It carries out the reaction 3',3'-c-di-GMP + 2 H2O = 2 GMP + 2 H(+). Member of the two-component regulatory system RpfG/RpfC, which is involved in the perception and response to the diffusible signaling factor (DSF), which is essential for cell-cell signaling. Detection of DSF leads to the positive regulation of biofilm dispersal and the production of virulence factors. Activated RpfG degrades cyclic di-GMP to GMP, leading to the activation of Clp, a global transcriptional regulator that regulates a large set of genes in DSF pathway. May also directly control genes involved in biofilm dispersal. The sequence is that of Cyclic di-GMP phosphodiesterase response regulator RpfG (rpfG) from Xanthomonas campestris pv. campestris (strain 8004).